The chain runs to 190 residues: Imidazoleglycerol-phosphate dehydratase (190 aa).

It belongs to the imidazoleglycerol-phosphate dehydratase family.

It localises to the cytoplasm. It catalyses the reaction D-erythro-1-(imidazol-4-yl)glycerol 3-phosphate = 3-(imidazol-4-yl)-2-oxopropyl phosphate + H2O. It functions in the pathway amino-acid biosynthesis; L-histidine biosynthesis; L-histidine from 5-phospho-alpha-D-ribose 1-diphosphate: step 6/9. The sequence is that of Imidazoleglycerol-phosphate dehydratase from Wolinella succinogenes (strain ATCC 29543 / DSM 1740 / CCUG 13145 / JCM 31913 / LMG 7466 / NCTC 11488 / FDC 602W) (Vibrio succinogenes).